The chain runs to 560 residues: Protein yellow (560 aa).

The N-terminal stretch at 1 to 30 (MHVQDKGGIGALTALSLLLVAVTMVTPTQA) is a signal peptide. Residues N153 and N224 are each glycosylated (N-linked (GlcNAc...) asparagine). The disordered stretch occupies residues 452 to 492 (QYRPVLPQKPQTSWGPSPPSRSYLPSLGASPGGPGQVVSSV). Low complexity predominate over residues 471–480 (SRSYLPSLGA).

This sequence belongs to the major royal jelly protein family.

The protein resides in the secreted. Its function is as follows. Controls the pigmentation pattern of the adult cuticle and larval mouth parts. The sequence is that of Protein yellow (y) from Drosophila pseudoobscura pseudoobscura (Fruit fly).